A 466-amino-acid chain; its full sequence is 3-isopropylmalate dehydratase large subunit (466 aa).

The [4Fe-4S] cluster site is built by C347, C407, and C410.

This sequence belongs to the aconitase/IPM isomerase family. LeuC type 1 subfamily. In terms of assembly, heterodimer of LeuC and LeuD. [4Fe-4S] cluster is required as a cofactor.

The catalysed reaction is (2R,3S)-3-isopropylmalate = (2S)-2-isopropylmalate. It participates in amino-acid biosynthesis; L-leucine biosynthesis; L-leucine from 3-methyl-2-oxobutanoate: step 2/4. In terms of biological role, catalyzes the isomerization between 2-isopropylmalate and 3-isopropylmalate, via the formation of 2-isopropylmaleate. This chain is 3-isopropylmalate dehydratase large subunit, found in Shigella flexneri.